Here is a 495-residue protein sequence, read N- to C-terminus: Glutamyl-tRNA(Gln) amidotransferase subunit A (495 aa).

Catalysis depends on charge relay system residues K78 and S159. The active-site Acyl-ester intermediate is the S183.

Belongs to the amidase family. GatA subfamily. In terms of assembly, heterotrimer of A, B and C subunits.

It carries out the reaction L-glutamyl-tRNA(Gln) + L-glutamine + ATP + H2O = L-glutaminyl-tRNA(Gln) + L-glutamate + ADP + phosphate + H(+). Functionally, allows the formation of correctly charged Gln-tRNA(Gln) through the transamidation of misacylated Glu-tRNA(Gln) in organisms which lack glutaminyl-tRNA synthetase. The reaction takes place in the presence of glutamine and ATP through an activated gamma-phospho-Glu-tRNA(Gln). This chain is Glutamyl-tRNA(Gln) amidotransferase subunit A, found in Rhizorhabdus wittichii (strain DSM 6014 / CCUG 31198 / JCM 15750 / NBRC 105917 / EY 4224 / RW1) (Sphingomonas wittichii).